A 149-amino-acid chain; its full sequence is Sec-independent protein translocase protein TatB (149 aa).

A helical membrane pass occupies residues 1-22 (MFDGIGFMELLLIGVLGLIVLG). Polar residues predominate over residues 86-113 (LKQAAQSVNRPYQVQDTPSAQDNQIHNP). Residues 86-149 (LKQAAQSVNR…DPRSNTKANG (64 aa)) form a disordered region. Residues 114 to 135 (ASQTVSTEASSTSASSAPKSES) show a composition bias toward low complexity.

Belongs to the TatB family. The Tat system comprises two distinct complexes: a TatABC complex, containing multiple copies of TatA, TatB and TatC subunits, and a separate TatA complex, containing only TatA subunits. Substrates initially bind to the TatABC complex, which probably triggers association of the separate TatA complex to form the active translocon.

The protein resides in the cell inner membrane. Functionally, part of the twin-arginine translocation (Tat) system that transports large folded proteins containing a characteristic twin-arginine motif in their signal peptide across membranes. Together with TatC, TatB is part of a receptor directly interacting with Tat signal peptides. TatB may form an oligomeric binding site that transiently accommodates folded Tat precursor proteins before their translocation. This Shewanella oneidensis (strain ATCC 700550 / JCM 31522 / CIP 106686 / LMG 19005 / NCIMB 14063 / MR-1) protein is Sec-independent protein translocase protein TatB.